The primary structure comprises 285 residues: Homeobox protein Hox-A13b (285 aa).

A DNA-binding region (homeobox) is located at residues 219-278 (GRKKRVPYTKVQLKELEREYAANKFITKDKRRRISAQTNLTERQVTIWFQNRRVKEKKVV).

Belongs to the Abd-B homeobox family.

Its subcellular location is the nucleus. Its function is as follows. Sequence-specific transcription factor which is part of a developmental regulatory system that provides cells with specific positional identities on the anterior-posterior axis. The chain is Homeobox protein Hox-A13b (hoxa13b) from Takifugu rubripes (Japanese pufferfish).